The chain runs to 500 residues: Coiled-coil domain-containing protein 85A (500 aa).

Low complexity predominate over residues methionine 1 to serine 23. A disordered region spans residues methionine 1–aspartate 30. 2 coiled-coil regions span residues glutamate 38 to cysteine 104 and methionine 132 to lysine 171. 2 disordered regions span residues arginine 200–asparagine 405 and asparagine 426–proline 465. The segment covering aspartate 204–aspartate 215 has biased composition (low complexity). Over residues histidine 231–leucine 254 the composition is skewed to basic and acidic residues. Positions glycine 372–arginine 381 are enriched in gly residues. The segment covering glycine 383 to serine 395 has biased composition (basic and acidic residues). The stretch at methionine 404–leucine 429 forms a coiled coil. The segment covering phenylalanine 434–proline 463 has biased composition (polar residues). Position 488 is an asymmetric dimethylarginine (arginine 488).

Belongs to the CCDC85 family. In terms of assembly, may interact with ARVCF; CTNND1; CTNND2 and PKP4.

The protein localises to the cell junction. It is found in the adherens junction. In terms of biological role, may play a role in cell-cell adhesion and epithelium development through its interaction with proteins of the beta-catenin family. The sequence is that of Coiled-coil domain-containing protein 85A (Ccdc85a) from Mus musculus (Mouse).